The chain runs to 551 residues: Tropolone cluster transcription factor tropK (551 aa).

The interval 1–21 (MSVAIKMSTNTVGGQSTRQPP) is disordered. The span at 7-20 (MSTNTVGGQSTRQP) shows a compositional bias: polar residues. Positions 25–52 (CLHCRNKKMKCDALQPRCKNCFNAGVEC) form a DNA-binding region, zn(2)-C6 fungal-type.

The protein localises to the nucleus. In terms of biological role, transcription factor that regulates the expression of the gene cluster that mediates the biosynthesis tropolone class of fungal maleic anhydrides, including stipitaldehydic, stipitatonic and stipitatic acids. The polypeptide is Tropolone cluster transcription factor tropK (Talaromyces stipitatus (strain ATCC 10500 / CBS 375.48 / QM 6759 / NRRL 1006) (Penicillium stipitatum)).